Reading from the N-terminus, the 378-residue chain is tRNA-specific 2-thiouridylase MnmA (378 aa).

ATP-binding positions include Gly12–Ser19 and Met38. The interval Asn98–Asp100 is interaction with target base in tRNA. Residue Cys103 is the Nucleophile of the active site. Cys103 and Cys201 form a disulfide bridge. Residue Gly127 coordinates ATP. The interval Lys151–Gln153 is interaction with tRNA. The active-site Cysteine persulfide intermediate is Cys201. Residues Arg319–Tyr320 form an interaction with tRNA region.

It belongs to the MnmA/TRMU family.

It localises to the cytoplasm. It catalyses the reaction S-sulfanyl-L-cysteinyl-[protein] + uridine(34) in tRNA + AH2 + ATP = 2-thiouridine(34) in tRNA + L-cysteinyl-[protein] + A + AMP + diphosphate + H(+). Its function is as follows. Catalyzes the 2-thiolation of uridine at the wobble position (U34) of tRNA, leading to the formation of s(2)U34. This is tRNA-specific 2-thiouridylase MnmA from Paracidovorax citrulli (strain AAC00-1) (Acidovorax citrulli).